A 2530-amino-acid polypeptide reads, in one-letter code: Agglutinin-like protein 2 (2530 aa).

The N-terminal stretch at 1 to 17 (MLLQFLLLSLCVSVATA) is a signal peptide. 4 cysteine pairs are disulfide-bonded: C73/C150, C96/C112, C205/C297, and C227/C256. Residues N253 and N315 are each glycosylated (N-linked (GlcNAc...) asparagine). ALS repeat units lie at residues 364-395 (TTIT…VDVP), 400-431 (TTVT…VQVP), 437-468 (VTTT…IREP), 473-504 (VTTT…IREP), 509-540 (VTTT…IREP), and 545-576 (VTTT…IREP). A glycan (N-linked (GlcNAc...) asparagine) is linked at N578. One copy of the ALS 7 repeat lies at 581–612 (VTTTEYWSQSYVTTSTITAPPGGTDTVIIREP). A glycan (N-linked (GlcNAc...) asparagine) is linked at N614. ALS repeat units follow at residues 617–648 (VTTT…IREP), 653–684 (VTTT…IREP), 689–720 (VTTT…IREP), 725–756 (VTTT…IREP), 761–792 (VTTT…IREP), 797–828 (VTTT…IREP), and 833–864 (VTTT…IREP). N866 is a glycosylation site (N-linked (GlcNAc...) asparagine). 4 ALS repeats span residues 869 to 900 (VTTT…IREP), 905 to 936 (VTTT…IREP), 941 to 972 (VTTT…IREP), and 977 to 1008 (VTTT…IREP). Residues 954 to 967 (TTTVTGPPGGTDTV) are compositionally biased toward low complexity. Residues 954–975 (TTTVTGPPGGTDTVIIREPPNP) form a disordered region. An N-linked (GlcNAc...) asparagine glycan is attached at N1010. ALS repeat units follow at residues 1013 to 1044 (VTTT…IREP), 1049 to 1077 (VTTT…TVII), 1085 to 1116 (VTTT…IREP), and 1121 to 1152 (VTTT…IREP). N1154 carries an N-linked (GlcNAc...) asparagine glycan. ALS repeat units lie at residues 1157 to 1188 (VTTT…IREP), 1193 to 1224 (VTTT…IREP), 1229 to 1260 (VTTT…IREP), 1265 to 1296 (VTTT…IREP), 1301 to 1332 (VTTT…IREP), and 1337 to 1368 (VTTT…IREP). An N-linked (GlcNAc...) asparagine glycan is attached at N1370. One copy of the ALS 29 repeat lies at 1373–1404 (VTTTEYWSQSYATTTTVTAPPGGTATVIIREP). N1406 carries N-linked (GlcNAc...) asparagine glycosylation. One copy of the ALS 30 repeat lies at 1409–1440 (VTTTEYWSQSYATTTTITAPPGDTDTVIIREP). A glycan (N-linked (GlcNAc...) asparagine) is linked at N1442. ALS repeat units follow at residues 1445-1476 (VTTT…IREP) and 1481-1512 (VTTT…IREP). Residue N1514 is glycosylated (N-linked (GlcNAc...) asparagine). One copy of the ALS 33 repeat lies at 1517 to 1548 (VTTTEYWSQSYATTTTVTAPPGGTATVIIREP). An N-linked (GlcNAc...) asparagine glycan is attached at N1550. One copy of the ALS 34 repeat lies at 1553–1584 (VTTTEYWSQSYATTTTITAPPGDTDTVIIREP). The N-linked (GlcNAc...) asparagine glycan is linked to N1586. Residues 1589–1620 (VTTTEYWSQSYATTTTVTAPPGGTDTVIIREP) form an ALS 35 repeat. N1622 is a glycosylation site (N-linked (GlcNAc...) asparagine). The stretch at 1625-1656 (VTTTEYWSQSYATTTTVTAPPGGTATVIIREP) is one ALS 36 repeat. N-linked (GlcNAc...) asparagine glycosylation occurs at N1658. ALS repeat units lie at residues 1661-1692 (VTTT…IREP) and 1697-1728 (VTTT…IREP). N-linked (GlcNAc...) asparagine glycosylation is present at N1730. Residues 1733 to 1764 (VTTTEYWSQSYATTTTVTAPPGGTDTVIIREP) form an ALS 39 repeat. N-linked (GlcNAc...) asparagine glycosylation occurs at N1766. 2 ALS repeats span residues 1769-1800 (VTTT…IREP) and 1805-1836 (VTTT…IREP). N-linked (GlcNAc...) asparagine glycosylation is present at N1838. 2 ALS repeats span residues 1841–1872 (VTTT…IREP) and 1877–1907 (VTTT…RIRE). N-linked (GlcNAc...) asparagine glycosylation is present at N1910. ALS repeat units lie at residues 1913–1944 (VTTT…IREP) and 1949–1980 (VTTT…IREP). N-linked (GlcNAc...) asparagine glycosylation occurs at N1982. ALS repeat units lie at residues 1985 to 2016 (VTTT…IREP), 2021 to 2052 (VTTT…IREP), and 2057 to 2088 (VTTT…IREP). N2090 carries N-linked (GlcNAc...) asparagine glycosylation. 2 ALS repeats span residues 2093–2124 (VTTT…IREP) and 2129–2157 (VTTT…SVII). N-linked (GlcNAc...) asparagine glycosylation occurs at N2197. 2 disordered regions span residues 2200–2235 (VTHL…GSEN) and 2274–2494 (TTII…QQTT). The span at 2204-2233 (PSSSSKPVDIPSSDVVTSTNDNSLTSLTGS) shows a compositional bias: low complexity. A glycan (N-linked (GlcNAc...) asparagine) is linked at N2281. Over residues 2282–2296 (GSGKSKSGELSSTGS) the composition is skewed to low complexity. Polar residues-rich tracts occupy residues 2329-2420 (STET…SATA) and 2429-2452 (NGAT…TTNI). N2444 and N2466 each carry an N-linked (GlcNAc...) asparagine glycan. 2 stretches are compositionally biased toward low complexity: residues 2453-2471 (QGGN…TGEP) and 2482-2494 (SISQ…QQTT). D2507 carries the GPI-anchor amidated aspartate lipid modification. The propeptide at 2508-2530 (GSGSIVQHSGWLYVLLTAISIFF) is removed in mature form.

The protein belongs to the ALS family. N-glycosylated and O-glycosylated. Post-translationally, the GPI-anchor is attached to the protein in the endoplasmic reticulum and serves to target the protein to the cell surface. There, the glucosamine-inositol phospholipid moiety is cleaved off and the GPI-modified mannoprotein is covalently attached via its lipidless GPI glycan remnant to the 1,6-beta-glucan of the outer cell wall layer.

The protein localises to the cell membrane. It localises to the secreted. Its subcellular location is the cell wall. In terms of biological role, cell surface adhesion protein which mediates both yeast-to-host tissue adherence and yeast aggregation. Plays an important role in the pathogenesis of C.albicans infections. This Candida albicans (strain SC5314 / ATCC MYA-2876) (Yeast) protein is Agglutinin-like protein 2 (ALS2).